Here is a 116-residue protein sequence, read N- to C-terminus: NADH-quinone oxidoreductase subunit A (116 aa).

Transmembrane regions (helical) follow at residues 3 to 23 (FTLLVVVLLTAIAFVGVVIAL), 61 to 81 (FAILFLMFDVETVFLFPWAVI), and 88 to 108 (QGLISILFFLVVLVLGLAYAW).

Belongs to the complex I subunit 3 family. In terms of assembly, NDH-1 is composed of 14 different subunits. Subunits NuoA, H, J, K, L, M, N constitute the membrane sector of the complex.

It is found in the cell inner membrane. The enzyme catalyses a quinone + NADH + 5 H(+)(in) = a quinol + NAD(+) + 4 H(+)(out). Functionally, NDH-1 shuttles electrons from NADH, via FMN and iron-sulfur (Fe-S) centers, to quinones in the respiratory chain. The immediate electron acceptor for the enzyme in this species is believed to be a menaquinone. Couples the redox reaction to proton translocation (for every two electrons transferred, four hydrogen ions are translocated across the cytoplasmic membrane), and thus conserves the redox energy in a proton gradient. This chain is NADH-quinone oxidoreductase subunit A, found in Bacteroides fragilis (strain ATCC 25285 / DSM 2151 / CCUG 4856 / JCM 11019 / LMG 10263 / NCTC 9343 / Onslow / VPI 2553 / EN-2).